The primary structure comprises 160 residues: Putative transcriptional regulator protein YobU (160 aa).

The sequence is that of Putative transcriptional regulator protein YobU (yobU) from Bacillus subtilis (strain 168).